The chain runs to 452 residues: Maltoporin (452 aa).

A signal peptide spans 1–25 (MMITLRKLPLAVAVAAGVMSAQAMA).

The protein belongs to the porin LamB (TC 1.B.3) family. As to quaternary structure, homotrimer formed of three 18-stranded antiparallel beta-barrels, containing three independent channels.

Its subcellular location is the cell outer membrane. It carries out the reaction beta-maltose(in) = beta-maltose(out). Functionally, involved in the transport of maltose and maltodextrins. The protein is Maltoporin of Salmonella choleraesuis (strain SC-B67).